A 180-amino-acid polypeptide reads, in one-letter code: Large ribosomal subunit protein uL6 (180 aa).

The protein belongs to the universal ribosomal protein uL6 family. As to quaternary structure, part of the 50S ribosomal subunit.

Its function is as follows. This protein binds to the 23S rRNA, and is important in its secondary structure. It is located near the subunit interface in the base of the L7/L12 stalk, and near the tRNA binding site of the peptidyltransferase center. The protein is Large ribosomal subunit protein uL6 of Anaeromyxobacter dehalogenans (strain 2CP-C).